The primary structure comprises 245 residues: Acyl-protein thioesterase 1 (245 aa).

Catalysis depends on charge relay system residues S126, D182, and H214.

This sequence belongs to the AB hydrolase superfamily. AB hydrolase 2 family.

It is found in the cytoplasm. It localises to the nucleus. It carries out the reaction S-hexadecanoyl-L-cysteinyl-[protein] + H2O = L-cysteinyl-[protein] + hexadecanoate + H(+). Functionally, hydrolyzes fatty acids from S-acylated cysteine residues in proteins with a strong preference for palmitoylated G-alpha proteins over other acyl substrates. Mediates the deacylation of G-alpha proteins such as GPA1 in vivo, but has weak or no activity toward palmitoylated Ras proteins. Has weak lysophospholipase activity in vitro; however such activity may not exist in vivo. The polypeptide is Acyl-protein thioesterase 1 (Neurospora crassa (strain ATCC 24698 / 74-OR23-1A / CBS 708.71 / DSM 1257 / FGSC 987)).